Reading from the N-terminus, the 77-residue chain is Large ribosomal subunit protein bL28 (77 aa).

It belongs to the bacterial ribosomal protein bL28 family.

The polypeptide is Large ribosomal subunit protein bL28 (Paracidovorax citrulli (strain AAC00-1) (Acidovorax citrulli)).